The primary structure comprises 184 residues: ATP synthase subunit b 1 (184 aa).

A helical membrane pass occupies residues 36 to 55 (NILNLAILVGVLVFYGRKVV).

This sequence belongs to the ATPase B chain family. In terms of assembly, F-type ATPases have 2 components, F(1) - the catalytic core - and F(0) - the membrane proton channel. F(1) has five subunits: alpha(3), beta(3), gamma(1), delta(1), epsilon(1). F(0) has four main subunits: a(1), b(1), b'(1) and c(10-14). The alpha and beta chains form an alternating ring which encloses part of the gamma chain. F(1) is attached to F(0) by a central stalk formed by the gamma and epsilon chains, while a peripheral stalk is formed by the delta, b and b' chains.

The protein localises to the cellular thylakoid membrane. F(1)F(0) ATP synthase produces ATP from ADP in the presence of a proton or sodium gradient. F-type ATPases consist of two structural domains, F(1) containing the extramembraneous catalytic core and F(0) containing the membrane proton channel, linked together by a central stalk and a peripheral stalk. During catalysis, ATP synthesis in the catalytic domain of F(1) is coupled via a rotary mechanism of the central stalk subunits to proton translocation. In terms of biological role, component of the F(0) channel, it forms part of the peripheral stalk, linking F(1) to F(0). This chain is ATP synthase subunit b 1, found in Crocosphaera subtropica (strain ATCC 51142 / BH68) (Cyanothece sp. (strain ATCC 51142)).